Consider the following 104-residue polypeptide: Large ribosomal subunit protein uL24 (104 aa).

This sequence belongs to the universal ribosomal protein uL24 family. As to quaternary structure, part of the 50S ribosomal subunit.

Its function is as follows. One of two assembly initiator proteins, it binds directly to the 5'-end of the 23S rRNA, where it nucleates assembly of the 50S subunit. Functionally, one of the proteins that surrounds the polypeptide exit tunnel on the outside of the subunit. This is Large ribosomal subunit protein uL24 from Shewanella amazonensis (strain ATCC BAA-1098 / SB2B).